A 276-amino-acid chain; its full sequence is Pantothenate synthetase (276 aa).

An ATP-binding site is contributed by 27–34 (MGALHKGH). Residue His34 is the Proton donor of the active site. Gln58 serves as a coordination point for (R)-pantoate. Residue Gln58 coordinates beta-alanine. ATP is bound at residue 147 to 150 (GKKD). Position 153 (Gln153) interacts with (R)-pantoate. ATP contacts are provided by residues Val176 and 184 to 187 (LSSR).

It belongs to the pantothenate synthetase family. As to quaternary structure, homodimer.

Its subcellular location is the cytoplasm. The enzyme catalyses (R)-pantoate + beta-alanine + ATP = (R)-pantothenate + AMP + diphosphate + H(+). It participates in cofactor biosynthesis; (R)-pantothenate biosynthesis; (R)-pantothenate from (R)-pantoate and beta-alanine: step 1/1. Its function is as follows. Catalyzes the condensation of pantoate with beta-alanine in an ATP-dependent reaction via a pantoyl-adenylate intermediate. The sequence is that of Pantothenate synthetase from Helicobacter acinonychis (strain Sheeba).